The sequence spans 511 residues: Cytochrome P450 705A5 (511 aa).

The chain crosses the membrane as a helical span at residues 12-30; it reads CFIFLLLCLFSRLSYDLFF. Cysteine 454 contributes to the heme binding site.

Belongs to the cytochrome P450 family. The cofactor is heme. As to expression, expressed primarily in the root epidermis.

It localises to the membrane. In terms of biological role, converts thalian-diol to a desaturated thalian-diol. In Arabidopsis thaliana (Mouse-ear cress), this protein is Cytochrome P450 705A5 (CYP705A5).